Reading from the N-terminus, the 238-residue chain is Ribose-5-phosphate isomerase A (238 aa).

Substrate is bound by residues 30 to 33, 87 to 90, and 100 to 103; these read SGST, DGAD, and KGGG. Residue Glu109 is the Proton acceptor of the active site. Lys127 contributes to the substrate binding site.

The protein belongs to the ribose 5-phosphate isomerase family. In terms of assembly, homodimer.

It catalyses the reaction aldehydo-D-ribose 5-phosphate = D-ribulose 5-phosphate. It functions in the pathway carbohydrate degradation; pentose phosphate pathway; D-ribose 5-phosphate from D-ribulose 5-phosphate (non-oxidative stage): step 1/1. Catalyzes the reversible conversion of ribose-5-phosphate to ribulose 5-phosphate. This Synechococcus sp. (strain WH7803) protein is Ribose-5-phosphate isomerase A.